A 103-amino-acid polypeptide reads, in one-letter code: Large ribosomal subunit protein bL21 (103 aa).

Belongs to the bacterial ribosomal protein bL21 family. Part of the 50S ribosomal subunit. Contacts protein L20.

This protein binds to 23S rRNA in the presence of protein L20. In Aliivibrio salmonicida (strain LFI1238) (Vibrio salmonicida (strain LFI1238)), this protein is Large ribosomal subunit protein bL21.